The sequence spans 702 residues: Polyribonucleotide nucleotidyltransferase (702 aa).

The Mg(2+) site is built by Asp-487 and Asp-493. Positions 554–613 (PKILTMQINPDKIRDVIGPSGKQINKIIEETGVKIDIEQDGTIFISSVNEEMNKKAKKII) constitute a KH domain. The region spanning 623–691 (GQVYLGKVKR…KQGRVNLSRK (69 aa)) is the S1 motif domain.

The protein belongs to the polyribonucleotide nucleotidyltransferase family. The cofactor is Mg(2+).

The protein resides in the cytoplasm. It carries out the reaction RNA(n+1) + phosphate = RNA(n) + a ribonucleoside 5'-diphosphate. Functionally, involved in mRNA degradation. Catalyzes the phosphorolysis of single-stranded polyribonucleotides processively in the 3'- to 5'-direction. In Anoxybacillus flavithermus (strain DSM 21510 / WK1), this protein is Polyribonucleotide nucleotidyltransferase.